The primary structure comprises 177 residues: Bifunctional protein PyrR (177 aa).

Residues 99 to 111 (VVLVDDVLFTGRT) carry the PRPP-binding motif.

This sequence belongs to the purine/pyrimidine phosphoribosyltransferase family. PyrR subfamily.

It catalyses the reaction UMP + diphosphate = 5-phospho-alpha-D-ribose 1-diphosphate + uracil. In terms of biological role, regulates the transcription of the pyrimidine nucleotide (pyr) operon in response to exogenous pyrimidines. Also displays a weak uracil phosphoribosyltransferase activity which is not physiologically significant. The sequence is that of Bifunctional protein PyrR from Geobacter sp. (strain M21).